The sequence spans 793 residues: Phenylalanine--tRNA ligase beta subunit (793 aa).

One can recognise a tRNA-binding domain in the interval 39 to 154 (TCSFSSIITA…ENTPLGESAC (116 aa)). The 79-residue stretch at 403–481 (PQASTLSFRT…QPWKVENKKA (79 aa)) folds into the B5 domain. Positions 457, 463, 466, and 467 each coordinate Mg(2+). Residues 697–793 (PIYPSSFRDI…QINDTKGTID (97 aa)) form the FDX-ACB domain.

The protein belongs to the phenylalanyl-tRNA synthetase beta subunit family. Type 1 subfamily. Tetramer of two alpha and two beta subunits. The cofactor is Mg(2+).

It localises to the cytoplasm. The catalysed reaction is tRNA(Phe) + L-phenylalanine + ATP = L-phenylalanyl-tRNA(Phe) + AMP + diphosphate + H(+). This chain is Phenylalanine--tRNA ligase beta subunit, found in Chlamydia caviae (strain ATCC VR-813 / DSM 19441 / 03DC25 / GPIC) (Chlamydophila caviae).